The sequence spans 387 residues: Beta-citrylglutamate synthase B (387 aa).

Residues 119 to 304 (FQELAGHGVP…VAGIIADYAA (186 aa)) enclose the ATP-grasp domain. Residues Lys158, 193 to 203 (QKYIKESHGRD), and Arg219 each bind ATP. The Mg(2+) site is built by Asp264, Glu277, and Asn279. Mn(2+)-binding residues include Asp264, Glu277, and Asn279. The segment at 325-361 (ASETSEPELGPPASAAVDNMSASSSSVDSDPESTTER) is disordered. Low complexity predominate over residues 337–352 (ASAAVDNMSASSSSVD).

The protein belongs to the RimK family. The cofactor is Mg(2+). Mn(2+) is required as a cofactor. Strongly expressed in brain and testis. Expressed in eyes, thymus, lung, kidney, skeletal muscle, spleen, skin and heart. Expressed in neurons of the neocortex, the gray matter and Purkinje cells.

The protein resides in the cytoplasm. The catalysed reaction is citrate + L-glutamate + ATP = beta-citrylglutamate + ADP + phosphate + H(+). It catalyses the reaction N-acetyl-L-aspartate + L-glutamate + ATP = N-acetyl-L-aspartyl-L-glutamate + ADP + phosphate + H(+). Functionally, catalyzes the synthesis of beta-citryl-L-glutamate and N-acetyl-L-aspartyl-L-glutamate. Beta-citryl-L-glutamate is synthesized more efficiently than N-acetyl-L-aspartyl-L-glutamate. The protein is Beta-citrylglutamate synthase B (Rimklb) of Mus musculus (Mouse).